We begin with the raw amino-acid sequence, 277 residues long: Venom serine protease (277 aa).

The first 19 residues, 1–19 (MNCGKIILLFITIIGVAKS), serve as a signal peptide directing secretion. The region spanning 34-269 (IVNGVETEIN…FMEFIHNATI (236 aa)) is the Peptidase S1 domain. Residues Cys-60 and Cys-76 are joined by a disulfide bond. Residue His-75 is the Charge relay system of the active site. N-linked (GlcNAc...) asparagine glycosylation is found at Asn-84 and Asn-104. The Charge relay system role is filled by Asp-126. N-linked (GlcNAc...) asparagine glycosylation is found at Asn-155 and Asn-158. 2 cysteine pairs are disulfide-bonded: Cys-192–Cys-207 and Cys-216–Cys-246. N-linked (GlcNAc...) asparagine glycosylation is present at Asn-218. Ser-220 (charge relay system) is an active-site residue. Asn-266 carries an N-linked (GlcNAc...) asparagine glycan.

It belongs to the peptidase S1 family. In terms of tissue distribution, expressed by the venom duct.

It localises to the secreted. This chain is Venom serine protease, found in Polistes dominula (European paper wasp).